The chain runs to 275 residues: Nitrogenase iron protein 1 (275 aa).

G9 to S16 contacts ATP. Position 97 (C97) interacts with [4Fe-4S] cluster. R100 is modified (ADP-ribosylarginine; by dinitrogenase reductase ADP-ribosyltransferase). Residue C132 participates in [4Fe-4S] cluster binding.

Belongs to the NifH/BchL/ChlL family. Homodimer. [4Fe-4S] cluster is required as a cofactor. The reversible ADP-ribosylation of Arg-100 inactivates the nitrogenase reductase and regulates nitrogenase activity.

The enzyme catalyses N2 + 8 reduced [2Fe-2S]-[ferredoxin] + 16 ATP + 16 H2O = H2 + 8 oxidized [2Fe-2S]-[ferredoxin] + 2 NH4(+) + 16 ADP + 16 phosphate + 6 H(+). Functionally, the key enzymatic reactions in nitrogen fixation are catalyzed by the nitrogenase complex, which has 2 components: the iron protein and the molybdenum-iron protein. This chain is Nitrogenase iron protein 1 (nifH1), found in Methanothermobacter thermautotrophicus (strain ATCC 29096 / DSM 1053 / JCM 10044 / NBRC 100330 / Delta H) (Methanobacterium thermoautotrophicum).